A 244-amino-acid polypeptide reads, in one-letter code: Small ribosomal subunit protein uS3 (244 aa).

In terms of domain architecture, KH type-2 spans 39–107; it reads VREMLRKKLA…PAHINVTEVR (69 aa). The segment at 213–244 is disordered; sequence VGQEKQDDSPRNDRNDRGDRGDRPSRPAREAR. The segment covering 216–244 has biased composition (basic and acidic residues); the sequence is EKQDDSPRNDRNDRGDRGDRPSRPAREAR.

The protein belongs to the universal ribosomal protein uS3 family. In terms of assembly, part of the 30S ribosomal subunit. Forms a tight complex with proteins S10 and S14.

Functionally, binds the lower part of the 30S subunit head. Binds mRNA in the 70S ribosome, positioning it for translation. The protein is Small ribosomal subunit protein uS3 of Xanthomonas euvesicatoria pv. vesicatoria (strain 85-10) (Xanthomonas campestris pv. vesicatoria).